The following is a 500-amino-acid chain: Cytochrome P450 2D15 (500 aa).

A heme-binding site is contributed by Cys446.

It belongs to the cytochrome P450 family. It depends on heme as a cofactor. In terms of tissue distribution, liver. Also detected in several other tissues.

The protein resides in the endoplasmic reticulum membrane. Its subcellular location is the microsome membrane. The catalysed reaction is an organic molecule + reduced [NADPH--hemoprotein reductase] + O2 = an alcohol + oxidized [NADPH--hemoprotein reductase] + H2O + H(+). High activity for the hydroxylation of bunitrolol and imipramine; low activity on debrisoquine. The sequence is that of Cytochrome P450 2D15 (CYP2D15) from Canis lupus familiaris (Dog).